The sequence spans 423 residues: Glutamate-1-semialdehyde 2,1-aminomutase (423 aa).

An N6-(pyridoxal phosphate)lysine modification is found at K262.

This sequence belongs to the class-III pyridoxal-phosphate-dependent aminotransferase family. HemL subfamily. Pyridoxal 5'-phosphate serves as cofactor.

The protein resides in the cytoplasm. It catalyses the reaction (S)-4-amino-5-oxopentanoate = 5-aminolevulinate. The protein operates within porphyrin-containing compound metabolism; protoporphyrin-IX biosynthesis; 5-aminolevulinate from L-glutamyl-tRNA(Glu): step 2/2. In Methanosphaera stadtmanae (strain ATCC 43021 / DSM 3091 / JCM 11832 / MCB-3), this protein is Glutamate-1-semialdehyde 2,1-aminomutase.